A 252-amino-acid chain; its full sequence is 3-deoxy-manno-octulosonate cytidylyltransferase (252 aa).

It belongs to the KdsB family.

Its subcellular location is the cytoplasm. The catalysed reaction is 3-deoxy-alpha-D-manno-oct-2-ulosonate + CTP = CMP-3-deoxy-beta-D-manno-octulosonate + diphosphate. The protein operates within nucleotide-sugar biosynthesis; CMP-3-deoxy-D-manno-octulosonate biosynthesis; CMP-3-deoxy-D-manno-octulosonate from 3-deoxy-D-manno-octulosonate and CTP: step 1/1. Its pathway is bacterial outer membrane biogenesis; lipopolysaccharide biosynthesis. Its function is as follows. Activates KDO (a required 8-carbon sugar) for incorporation into bacterial lipopolysaccharide in Gram-negative bacteria. The chain is 3-deoxy-manno-octulosonate cytidylyltransferase from Thiobacillus denitrificans (strain ATCC 25259 / T1).